The sequence spans 279 residues: Acetylglutamate kinase (279 aa).

Substrate is bound by residues 64 to 65, R86, and N177; that span reads GG.

The protein belongs to the acetylglutamate kinase family. ArgB subfamily.

The protein localises to the cytoplasm. The enzyme catalyses N-acetyl-L-glutamate + ATP = N-acetyl-L-glutamyl 5-phosphate + ADP. It participates in amino-acid biosynthesis; L-arginine biosynthesis; N(2)-acetyl-L-ornithine from L-glutamate: step 2/4. Its function is as follows. Catalyzes the ATP-dependent phosphorylation of N-acetyl-L-glutamate. This Campylobacter jejuni (strain RM1221) protein is Acetylglutamate kinase.